The primary structure comprises 432 residues: Adenylosuccinate synthetase (432 aa).

Residues 12 to 18 and 40 to 42 each bind GTP; these read GDEGKGK and GHT. Catalysis depends on Asp13, which acts as the Proton acceptor. Residues Asp13 and Gly40 each coordinate Mg(2+). IMP is bound by residues 13–16, 38–41, Thr132, Arg146, Gln226, Thr241, and Arg305; these read DEGK and NAGH. His41 acts as the Proton donor in catalysis. 301-307 serves as a coordination point for substrate; it reads VVTGRKR. GTP-binding positions include Arg307, 333–335, and 415–417; these read KLD and STS.

It belongs to the adenylosuccinate synthetase family. As to quaternary structure, homodimer. Requires Mg(2+) as cofactor.

It localises to the cytoplasm. It carries out the reaction IMP + L-aspartate + GTP = N(6)-(1,2-dicarboxyethyl)-AMP + GDP + phosphate + 2 H(+). Its pathway is purine metabolism; AMP biosynthesis via de novo pathway; AMP from IMP: step 1/2. Its function is as follows. Plays an important role in the de novo pathway of purine nucleotide biosynthesis. Catalyzes the first committed step in the biosynthesis of AMP from IMP. This chain is Adenylosuccinate synthetase, found in Rhizobium leguminosarum bv. trifolii (strain WSM2304).